We begin with the raw amino-acid sequence, 324 residues long: MKILFIVDPLETLKPGHDTSVALMQAAARRGHSVWAAEVGDLQVHHHRAAAQVRTLTIHPGRTPFYTVEAVGFYPLSEADVIWMRKDPPVTSAYLWATQVLDLVNAGRGDGRTTFVLNRPSGLRNDNEKLYALHFPDLVPETRVCTHRQDILDFVDIHGRAVIKPLDGKGGEGIFLLARADRNLNAIIEASTAYGTRHVMVQRYLEESRQGDKRIVLLAGEPIGALLRVPREDDVRGNMAAGGRVVKTTLTERDREICRVVGPRLVADGHYFVGIDVIGAYLTEINVTSPTGICEIDVLDGVVLEDEIVDWLVEYTRPALARNL.

Positions 129 to 313 (KLYALHFPDL…LEDEIVDWLV (185 aa)) constitute an ATP-grasp domain. Position 155-211 (155-211 (VDIHGRAVIKPLDGKGGEGIFLLARADRNLNAIIEASTAYGTRHVMVQRYLEESRQG)) interacts with ATP. Glu284 and Asn286 together coordinate Mg(2+).

The protein belongs to the prokaryotic GSH synthase family. The cofactor is Mg(2+). Mn(2+) is required as a cofactor.

It carries out the reaction gamma-L-glutamyl-L-cysteine + glycine + ATP = glutathione + ADP + phosphate + H(+). It participates in sulfur metabolism; glutathione biosynthesis; glutathione from L-cysteine and L-glutamate: step 2/2. The chain is Glutathione synthetase from Gloeobacter violaceus (strain ATCC 29082 / PCC 7421).